The chain runs to 283 residues: 4-diphosphocytidyl-2-C-methyl-D-erythritol kinase (283 aa).

Lys-11 is an active-site residue. Residue 94–104 (PVAAGLAGGSA) participates in ATP binding. Asp-136 is an active-site residue.

It belongs to the GHMP kinase family. IspE subfamily.

The catalysed reaction is 4-CDP-2-C-methyl-D-erythritol + ATP = 4-CDP-2-C-methyl-D-erythritol 2-phosphate + ADP + H(+). The protein operates within isoprenoid biosynthesis; isopentenyl diphosphate biosynthesis via DXP pathway; isopentenyl diphosphate from 1-deoxy-D-xylulose 5-phosphate: step 3/6. Functionally, catalyzes the phosphorylation of the position 2 hydroxy group of 4-diphosphocytidyl-2C-methyl-D-erythritol. The sequence is that of 4-diphosphocytidyl-2-C-methyl-D-erythritol kinase from Acetivibrio thermocellus (strain ATCC 27405 / DSM 1237 / JCM 9322 / NBRC 103400 / NCIMB 10682 / NRRL B-4536 / VPI 7372) (Clostridium thermocellum).